The primary structure comprises 261 residues: Ribosomal RNA small subunit methyltransferase J (261 aa).

S-adenosyl-L-methionine contacts are provided by residues 109–110 (RD), 125–126 (ER), and D179.

The protein belongs to the methyltransferase superfamily. RsmJ family.

The protein localises to the cytoplasm. The catalysed reaction is guanosine(1516) in 16S rRNA + S-adenosyl-L-methionine = N(2)-methylguanosine(1516) in 16S rRNA + S-adenosyl-L-homocysteine + H(+). In terms of biological role, specifically methylates the guanosine in position 1516 of 16S rRNA. This Pseudomonas aeruginosa (strain LESB58) protein is Ribosomal RNA small subunit methyltransferase J.